Consider the following 196-residue polypeptide: MPGMVPPHVPPQMLNIPQTSLQAKPVAPQVPSPGGAPGQGPYPYSLSEPAPLTLDTSGKNLTEQNSYSNIPHEGKHTPLYERSLPINPAQSGSPNHVDSAYFPGSSTSSSSDNDEGSGGATKYTIYWGFRATDHHVQGRDSQARGTAAHWHGGHVCSPNVFWRISHGPAQQLTFPTEQAAPPVCPAPASRRLSAPG.

Pro residues predominate over residues Met1–Pro10. 2 disordered regions span residues Met1–Gly118 and Thr176–Gly196. Low complexity predominate over residues Pro25–Ser45. Residues Leu54–Asn69 show a composition bias toward polar residues.

This is an uncharacterized protein from Homo sapiens (Human).